Reading from the N-terminus, the 301-residue chain is Galectin-6 (301 aa).

Galectin domains follow at residues 19-149 (YKRP…INFF) and 173-301 (YVGA…YVHI).

This is Galectin-6 (Lgals6) from Mus musculus (Mouse).